Here is a 217-residue protein sequence, read N- to C-terminus: Octanoyltransferase (217 aa).

The region spanning 31 to 206 is the BPL/LPL catalytic domain; it reads KSVMDEAWLL…ELVSRLGYAE (176 aa). Substrate-binding positions include 70 to 77, 137 to 139, and 150 to 152; these read RGGQVTYH, SLG, and GLA. Cysteine 168 acts as the Acyl-thioester intermediate in catalysis.

The protein belongs to the LipB family.

Its subcellular location is the cytoplasm. The enzyme catalyses octanoyl-[ACP] + L-lysyl-[protein] = N(6)-octanoyl-L-lysyl-[protein] + holo-[ACP] + H(+). Its pathway is protein modification; protein lipoylation via endogenous pathway; protein N(6)-(lipoyl)lysine from octanoyl-[acyl-carrier-protein]: step 1/2. Its function is as follows. Catalyzes the transfer of endogenously produced octanoic acid from octanoyl-acyl-carrier-protein onto the lipoyl domains of lipoate-dependent enzymes. Lipoyl-ACP can also act as a substrate although octanoyl-ACP is likely to be the physiological substrate. This is Octanoyltransferase from Pseudomonas aeruginosa (strain UCBPP-PA14).